Here is a 2971-residue protein sequence, read N- to C-terminus: Reticulocyte-binding protein homolog 1 (2971 aa).

An N-terminal signal peptide occupies residues Met-1–Phe-20. Over Ser-21 to Arg-2897 the chain is Extracellular. Positions Asn-30 to Glu-50 are disordered. Asn-70, Asn-78, Asn-87, Asn-135, Asn-286, Asn-384, and Asn-417 each carry an N-linked (GlcNAc...) asparagine glycan. Residues Leu-500–Asn-833 form an erythrocyte binding domain (EBD) region. LRR repeat units follow at residues Tyr-528–Asp-553 and Leu-607–Lys-633. N-linked (GlcNAc...) asparagine glycosylation occurs at Asn-685. 2 LRR repeats span residues Ile-736–Asp-758 and Gln-785–Glu-808. Residues Asn-830, Asn-892, Asn-1000, and Asn-1010 are each glycosylated (N-linked (GlcNAc...) asparagine). LRR repeat units lie at residues Leu-993–Asp-1018 and Leu-1356–Glu-1381. Asn-1425 carries N-linked (GlcNAc...) asparagine glycosylation. An LRR 7 repeat occupies Ala-1466–Glu-1489. An N-linked (GlcNAc...) asparagine glycan is attached at Asn-1496. LRR repeat units lie at residues Tyr-1512–Asn-1537, Ser-1586–Glu-1609, and Glu-1611–Asn-1636. N-linked (GlcNAc...) asparagine glycosylation is found at Asn-1664, Asn-1692, Asn-1718, Asn-1816, and Asn-1844. 2 LRR repeats span residues Leu-1700–Tyr-1723 and Leu-1809–Asn-1834. An LRR 13 repeat occupies Gln-1880–Glu-1903. Asn-1913 and Asn-1918 each carry an N-linked (GlcNAc...) asparagine glycan. Residues Lys-1944 to Phe-1967 form an LRR 14 repeat. 6 N-linked (GlcNAc...) asparagine glycosylation sites follow: Asn-2054, Asn-2207, Asn-2289, Asn-2300, Asn-2338, and Asn-2405. Residues Ile-2523 to Ile-2548 form an LRR 15 repeat. 2 N-linked (GlcNAc...) asparagine glycosylation sites follow: Asn-2598 and Asn-2752. The LRR 16 repeat unit spans residues Glu-2731–Thr-2754. Composition is skewed to basic and acidic residues over residues Lys-2773–Asn-2782 and Gln-2795–Leu-2804. Disordered stretches follow at residues Lys-2773–Gln-2825 and His-2840–Gln-2862. Asn-2811 carries N-linked (GlcNAc...) asparagine glycosylation. Residues Glu-2814–Gln-2825 show a composition bias toward basic and acidic residues. A helical membrane pass occupies residues Met-2898–Ile-2918. Residues Asn-2919–Ile-2971 lie on the Cytoplasmic side of the membrane.

In terms of assembly, may in part interact with AMA1 in the moving tight junction between the parasite and the erythrocyte membranes; the interaction may facilitate junction formation and active invasion. Proteolytically processed into multiple fragments following schizont rupture. In the mature schizont stage prior to merozoite release, full length RH1 is processed post-Golgi into a 240 kDa N-terminal form and a 120 kDa C-terminal form containing the transmembrane region. Both forms appear not to form a complex. However, they appear to remain in close proximity in late schizonts. Following merozoite invasion of host erythrocytes, the 240 kDa form is further processed into a 140 kDa form which may be involved in the disengagement of the ligand-receptor complex required during the invasion process. Also, the 120 kDa is further cleaved into a 110 kDa form and a transmembrane 9 kDa form probably by ROM4.

It localises to the cell membrane. Its subcellular location is the secreted. The protein resides in the cell junction. It is found in the tight junction. The protein localises to the cytoplasmic vesicle. It localises to the secretory vesicle. Its subcellular location is the rhoptry. During the asexual blood stage, binds to a sialic acid containing receptor on the surface of the host erythrocyte and thus is involved in merozoite invasion. Binds erythrocytes via a neuraminidase sensitive and trypsin-, chymotrypsin-resistant receptor. After merozoite attachment and reorientation, RH1 binding to its erythrocyte receptor triggers an increase in intracellular Ca(2+) within the parasite resulting in the release of microneme proteins such as EBA175 which in turn leads to the formation of the tight junction between parasite and host cell. This is Reticulocyte-binding protein homolog 1 from Plasmodium falciparum (isolate 3D7).